The chain runs to 171 residues: Group 1 truncated hemoglobin LI410 (171 aa).

A chloroplast-targeting transit peptide spans 1-23; sequence MMRTVQLRTLRPCIRAQQQPVRA. Heme-binding residues include Y63 and H111.

The protein belongs to the truncated hemoglobin family. Group I subfamily. Requires heme as cofactor.

It localises to the plastid. Its subcellular location is the chloroplast. This Chlamydomonas moewusii (Chlamydomonas eugametos) protein is Group 1 truncated hemoglobin LI410 (LI410).